We begin with the raw amino-acid sequence, 371 residues long: Queuine tRNA-ribosyltransferase (371 aa).

The Proton acceptor role is filled by aspartate 93. Residues 93–97, aspartate 147, glutamine 191, and glycine 218 contribute to the substrate site; that span reads DSGGF. An RNA binding region spans residues 249–255; sequence GVGTVVD. Aspartate 268 functions as the Nucleophile in the catalytic mechanism. The interval 273–277 is RNA binding; important for wobble base 34 recognition; sequence TRNAR. Residues cysteine 306, cysteine 308, cysteine 311, and histidine 337 each coordinate Zn(2+).

The protein belongs to the queuine tRNA-ribosyltransferase family. In terms of assembly, homodimer. Within each dimer, one monomer is responsible for RNA recognition and catalysis, while the other monomer binds to the replacement base PreQ1. It depends on Zn(2+) as a cofactor.

The catalysed reaction is 7-aminomethyl-7-carbaguanine + guanosine(34) in tRNA = 7-aminomethyl-7-carbaguanosine(34) in tRNA + guanine. Its pathway is tRNA modification; tRNA-queuosine biosynthesis. Its function is as follows. Catalyzes the base-exchange of a guanine (G) residue with the queuine precursor 7-aminomethyl-7-deazaguanine (PreQ1) at position 34 (anticodon wobble position) in tRNAs with GU(N) anticodons (tRNA-Asp, -Asn, -His and -Tyr). Catalysis occurs through a double-displacement mechanism. The nucleophile active site attacks the C1' of nucleotide 34 to detach the guanine base from the RNA, forming a covalent enzyme-RNA intermediate. The proton acceptor active site deprotonates the incoming PreQ1, allowing a nucleophilic attack on the C1' of the ribose to form the product. After dissociation, two additional enzymatic reactions on the tRNA convert PreQ1 to queuine (Q), resulting in the hypermodified nucleoside queuosine (7-(((4,5-cis-dihydroxy-2-cyclopenten-1-yl)amino)methyl)-7-deazaguanosine). This chain is Queuine tRNA-ribosyltransferase, found in Leptospira biflexa serovar Patoc (strain Patoc 1 / Ames).